A 249-amino-acid chain; its full sequence is Basic leucine zipper 23 (249 aa).

Residues 66–90 (KVSTDDTSESSGKKRPLGNREAVRK) are disordered. Positions 74–121 (ESSGKKRPLGNREAVRKYREKKKAKAASLEDEVMRLKAVNNQLLKRLQ) constitute a bZIP domain. The basic motif stretch occupies residues 78 to 98 (KKRPLGNREAVRKYREKKKAK). Residues 102 to 116 (LEDEVMRLKAVNNQL) are leucine-zipper.

The protein resides in the nucleus. In terms of biological role, transcription factor involved in the response to zinc ion deficiency. Binds to the consensus sequence 5'-[AG]TGTCGACA[CT]-3' also called zinc deficiency response element (ZDRE). The ZDRE sequence is conserved in the plant kingdom and present in the promoters of genes that constitute the primary response to zinc deficiency, comprising additional ZIP metal transporter genes. Required for zinc accumulation in roots. Mediates the expression of the zinc transporter ZIP12 during growth in zinc-deficient conditions. ZIP12 transporter is involved in zinc uptake in roots. This chain is Basic leucine zipper 23, found in Arabidopsis thaliana (Mouse-ear cress).